Here is a 549-residue protein sequence, read N- to C-terminus: MLPPRQQPRPGGLQTSLSLVSPDACGSPNPQERGSTSDQARDSPSESASSRETWPTSDALMLKKLEKEKENGYTEHSVVRNISNSDKMSLRDIARERVDVIAERMRNLPDEYLEKFKHELRVILEGLGGAQHREEFLFLQRLVNSRGDLTDGTLIITHRTQLEILVAIKTGIQAFLHPSVSLSQASLIDIFLYKRCRNIACGSMLPAEECSCEICAKKNGFCNLCMCVICYKFDFEVNSCRWIGCDLCSHWTHTDCAISNGQIGTGPSVKNGASSAETLFRCHACSRTSELLGWVKDVFQHCAPSWDAEAFVRELDYVRRIFQRSEDARGRKLFWKCEELIEKLKNGVADPMACKVILSFFQELDVDPSKSQDNDEGGRLIAPEEAFNKIADVVQEAIRKMEAVAEEKMRMVKKARLALDACDQELKDKAREVTSLKMERQRKKQQIDELESIVRLKQAEADMFDLKAGEARREAERLQRIALAKTEKSEEDYASRYLKQRLSEAEAEKQYLFEKIKLQESSRASQSSAGGNDPSQMMYSKIQDLIKNM.

Positions 1–56 are disordered; that stretch reads MLPPRQQPRPGGLQTSLSLVSPDACGSPNPQERGSTSDQARDSPSESASSRETWPT. Composition is skewed to polar residues over residues 28-38 and 45-56; these read PNPQERGSTSD and SESASSRETWPT. Residues 224–288 form a PHD-type zinc finger; the sequence is LCMCVICYKF…LFRCHACSRT (65 aa). Residues 394–520 adopt a coiled-coil conformation; that stretch reads VQEAIRKMEA…YLFEKIKLQE (127 aa). Residues 519-549 form a disordered region; it reads QESSRASQSSAGGNDPSQMMYSKIQDLIKNM. Positions 521-538 are enriched in polar residues; that stretch reads SSRASQSSAGGNDPSQMM.

Self-interacts and probably forms heteromers. Binds to VPg of pea seed borne mosaic virus (PSbMV), turnip mosaic virus (TuMV) and lettuce mosaic virus (LMV), but not with VPg of tobacco etch virus (TEV), cowpea mosaic virus (CPMV), tomato black ring virus (TBRV) and grapevine fan leaf virus (GFLV).

It is found in the nucleus. Functionally, required for the maintenance and/or establishment of both the shoot and root meristems, probably by controlling the expression of the meristem genes and of genes required for auxin responses. Involved in the development of the basal pole and in auxin-mediated root and vascular development in the embryo. Confers sensitivity to turnip mosaic virus (TuMV) probably by promoting viral movement and multiplication via interaction with TuMV VPg. This is OBERON-like protein (PVIP) from Nicotiana benthamiana.